Consider the following 57-residue polypeptide: UPF0391 membrane protein RPE_2138 (57 aa).

Helical transmembrane passes span 4-24 (WVVTFLVVALIAGILGFGGIA) and 30-50 (IAKIIFFIAVVLFLVSAVIGL).

It belongs to the UPF0391 family.

The protein resides in the cell membrane. In Rhodopseudomonas palustris (strain BisA53), this protein is UPF0391 membrane protein RPE_2138.